The chain runs to 769 residues: Serine protease HtrA-like (769 aa).

Residues 1–20 (MDIGKKHVIPKSQYRRKRRE) are compositionally biased toward basic residues. Positions 1-390 (MDIGKKHVIP…ATSKLNKGRA (390 aa)) are disordered. Composition is skewed to basic and acidic residues over residues 21–64 (FFHN…ERFK) and 71–108 (LEQRNRDVNENKAEESKSNQDSKSAYNRDHYLTDDVSK). The segment covering 126-137 (YEQNSEATLSTK) has biased composition (polar residues). Over residues 138–186 (STDKVESTEMRKLSSDKNKVGHEEQHVLSKPSEHDKETRIDSESSRTDS) the composition is skewed to basic and acidic residues. Residues 247–262 (QQSQNEQTKTYTYGDS) are compositionally biased toward polar residues. Basic and acidic residues-rich tracts occupy residues 264–296 (QNDKSNHENDLSHHIPSISDDKDNVMRENHIVD) and 310–330 (KTDDDRKLDEKIHVEDKHKQN). Polar residues predominate over residues 331-347 (ADSSETVGYQSQSTASH). The segment covering 348–364 (RSTEKRNISINDHDKLN) has biased composition (basic and acidic residues). The span at 365–390 (GQKTNTKTSANNNQKKATSKLNKGRA) shows a compositional bias: polar residues. The helical transmembrane segment at 410–430 (LVILMGIIILIVILNAIFNNV) threads the bilayer. Catalysis depends on charge relay system residues H504, D534, and S619. Positions 680–733 (IASLNSFERQAVKLPGKVKNGVVVDQVDNNGLADQSGLKKGDVITELDGKLLED) constitute a PDZ domain.

The protein belongs to the peptidase S1C family.

The protein localises to the cell membrane. The protein is Serine protease HtrA-like of Staphylococcus aureus (strain COL).